A 133-amino-acid polypeptide reads, in one-letter code: MRITQGTFSFLPDLTAAQVKAQIQYALDQNWAVSVEYTDDPHPRNTYWEMWGLPMFDLRDAAGVYGEVEACRTAHPGKYVRVNAFDSNRGWETVRLSFIVQRPEKEDGFRLDRTEGPGRTQRYALQHRSYAAG.

The protein belongs to the RuBisCO small chain family. As to quaternary structure, heterohexadecamer of 8 large and 8 small subunits.

In terms of biological role, ruBisCO catalyzes two reactions: the carboxylation of D-ribulose 1,5-bisphosphate, the primary event in carbon dioxide fixation, as well as the oxidative fragmentation of the pentose substrate. Both reactions occur simultaneously and in competition at the same active site. Although the small subunit is not catalytic it is essential for maximal activity. The chain is Ribulose bisphosphate carboxylase small subunit from Xanthobacter flavus.